We begin with the raw amino-acid sequence, 103 residues long: Glutaredoxin-C1 (103 aa).

Residues 1-102 (MDRVNRLAAQ…PLLRNAGALW (102 aa)) form the Glutaredoxin domain. A disulfide bond links Cys21 and Cys24.

Belongs to the glutaredoxin family. CC-type subfamily.

The protein localises to the cytoplasm. Its function is as follows. Has a glutathione-disulfide oxidoreductase activity in the presence of NADPH and glutathione reductase. Reduces low molecular weight disulfides and proteins. This Oryza sativa subsp. japonica (Rice) protein is Glutaredoxin-C1 (GRXC1).